Here is a 407-residue protein sequence, read N- to C-terminus: Formate-dependent phosphoribosylglycinamide formyltransferase (407 aa).

N(1)-(5-phospho-beta-D-ribosyl)glycinamide is bound by residues 28-29 (EL) and Glu88. ATP-binding positions include Arg121, Lys162, 167–172 (SSGKGQ), 202–205 (EGFI), and Glu210. Positions 126-320 (RLAAEELGVA…EFELHAKAIL (195 aa)) constitute an ATP-grasp domain. Mg(2+) contacts are provided by Glu279 and Glu291. N(1)-(5-phospho-beta-D-ribosyl)glycinamide is bound by residues Asp298, Lys367, and 374-375 (RR).

Belongs to the PurK/PurT family. Homodimer.

It catalyses the reaction N(1)-(5-phospho-beta-D-ribosyl)glycinamide + formate + ATP = N(2)-formyl-N(1)-(5-phospho-beta-D-ribosyl)glycinamide + ADP + phosphate + H(+). It participates in purine metabolism; IMP biosynthesis via de novo pathway; N(2)-formyl-N(1)-(5-phospho-D-ribosyl)glycinamide from N(1)-(5-phospho-D-ribosyl)glycinamide (formate route): step 1/1. Functionally, involved in the de novo purine biosynthesis. Catalyzes the transfer of formate to 5-phospho-ribosyl-glycinamide (GAR), producing 5-phospho-ribosyl-N-formylglycinamide (FGAR). Formate is provided by PurU via hydrolysis of 10-formyl-tetrahydrofolate. This chain is Formate-dependent phosphoribosylglycinamide formyltransferase, found in Herminiimonas arsenicoxydans.